A 63-amino-acid chain; its full sequence is Large ribosomal subunit protein bL35 (63 aa).

This sequence belongs to the bacterial ribosomal protein bL35 family.

The protein is Large ribosomal subunit protein bL35 of Sulfurimonas denitrificans (strain ATCC 33889 / DSM 1251) (Thiomicrospira denitrificans (strain ATCC 33889 / DSM 1251)).